Consider the following 175-residue polypeptide: MAKADKATAVADIAEQFKEATATVVTEYRGLTVANLAQLRRSLGESATYTVAKNTLVKRAAAEAGIDGLDELFTGPTAIAFVQGEPVDAAKAIKAFAKEHKALVIKGGYMEGRALSIDEVNRIADLESREVLLAKLAGAMKGNLAKAAGLFNAPASQVARLAAALQEKKAGEEAA.

Belongs to the universal ribosomal protein uL10 family. In terms of assembly, part of the ribosomal stalk of the 50S ribosomal subunit. The N-terminus interacts with L11 and the large rRNA to form the base of the stalk. The C-terminus forms an elongated spine to which L12 dimers bind in a sequential fashion forming a multimeric L10(L12)X complex.

Forms part of the ribosomal stalk, playing a central role in the interaction of the ribosome with GTP-bound translation factors. The protein is Large ribosomal subunit protein uL10 of Mycobacterium sp. (strain KMS).